The chain runs to 263 residues: MFRNQYDNDVTVWSPQGRIHQIEYAMEAVKQGSATVGLKSKTHAVLVALKRAQSELAAHRKKILHVDNHIGISIAGLTADARLLCNFMRQECLDSRFVFDRPLPVSRLVSLIGSKTQIPTQRYGRRPYGVGLLIAGYDDMGPHIFQTCPSANYFDCRAMSIGARSQSARTYLERHMSEFMECNLNELVKHGLRALRETLPAEQDLTTKNVSIGIVGKDLEFTIYDDDDVSPFLEGLEERPQRKAQPAQPADEPAEKADEPMEH.

Position 1 is an N-acetylmethionine (methionine 1). The residue at position 110 (serine 110) is a Phosphoserine; alternate. A glycan (O-linked (GlcNAc) serine; alternate) is linked at serine 110. A Glycyl lysine isopeptide (Lys-Gly) (interchain with G-Cter in ubiquitin) cross-link involves residue lysine 115. A Phosphoserine modification is found at serine 177. Residue lysine 208 forms a Glycyl lysine isopeptide (Lys-Gly) (interchain with G-Cter in ubiquitin) linkage. Residues 232–263 (FLEGLEERPQRKAQPAQPADEPAEKADEPMEH) form a disordered region. Residues 253–263 (PAEKADEPMEH) show a composition bias toward basic and acidic residues.

Belongs to the peptidase T1A family. As to quaternary structure, the 26S proteasome consists of a 20S proteasome core and two 19S regulatory subunits. The 20S proteasome core is a barrel-shaped complex made of 28 subunits that are arranged in four stacked rings. The two outer rings are each formed by seven alpha subunits, and the two inner rings are formed by seven beta subunits. The proteolytic activity is exerted by three beta-subunits PSMB5, PSMB6 and PSMB7. Interacts with NOTCH3. Interacts with ZFAND1.

It localises to the cytoplasm. Its subcellular location is the nucleus. Component of the 20S core proteasome complex involved in the proteolytic degradation of most intracellular proteins. This complex plays numerous essential roles within the cell by associating with different regulatory particles. Associated with two 19S regulatory particles, forms the 26S proteasome and thus participates in the ATP-dependent degradation of ubiquitinated proteins. The 26S proteasome plays a key role in the maintenance of protein homeostasis by removing misfolded or damaged proteins that could impair cellular functions, and by removing proteins whose functions are no longer required. Associated with the PA200 or PA28, the 20S proteasome mediates ubiquitin-independent protein degradation. This type of proteolysis is required in several pathways including spermatogenesis (20S-PA200 complex) or generation of a subset of MHC class I-presented antigenic peptides (20S-PA28 complex). The polypeptide is Proteasome subunit alpha type-1 (PSMA1) (Macaca fascicularis (Crab-eating macaque)).